The following is a 134-amino-acid chain: NADH-quinone oxidoreductase subunit A 1 (134 aa).

3 consecutive transmembrane segments (helical) span residues 10–30 (LIPLAIYTLFAVGLIGILLLA), 65–85 (FYLIAIFFIVFDVEGAFILAW), and 94–114 (IPGLVHITLFITVLLLGLVWL).

The protein belongs to the complex I subunit 3 family. As to quaternary structure, NDH-1 is composed of 14 different subunits. Subunits NuoA, H, J, K, L, M, N constitute the membrane sector of the complex.

It is found in the cell inner membrane. The enzyme catalyses a quinone + NADH + 5 H(+)(in) = a quinol + NAD(+) + 4 H(+)(out). NDH-1 shuttles electrons from NADH, via FMN and iron-sulfur (Fe-S) centers, to quinones in the respiratory chain. The immediate electron acceptor for the enzyme in this species is believed to be ubiquinone. Couples the redox reaction to proton translocation (for every two electrons transferred, four hydrogen ions are translocated across the cytoplasmic membrane), and thus conserves the redox energy in a proton gradient. The sequence is that of NADH-quinone oxidoreductase subunit A 1 from Citrifermentans bemidjiense (strain ATCC BAA-1014 / DSM 16622 / JCM 12645 / Bem) (Geobacter bemidjiensis).